The sequence spans 176 residues: Large ribosomal subunit protein uL10 (176 aa).

This sequence belongs to the universal ribosomal protein uL10 family. As to quaternary structure, part of the ribosomal stalk of the 50S ribosomal subunit. The N-terminus interacts with L11 and the large rRNA to form the base of the stalk. The C-terminus forms an elongated spine to which L12 dimers bind in a sequential fashion forming a multimeric L10(L12)X complex.

Forms part of the ribosomal stalk, playing a central role in the interaction of the ribosome with GTP-bound translation factors. The polypeptide is Large ribosomal subunit protein uL10 (Saccharophagus degradans (strain 2-40 / ATCC 43961 / DSM 17024)).